Reading from the N-terminus, the 266-residue chain is MRLIPLTTAEQVGKWAARHIVNRINAFKPTADRPFVLGLPTGGTPMTTYKALVEMHKAGQVSFKHVVTFNMDEYVGLPKEHPESYYSFMHRNFFDHVDIPAENINLLNGNAPDIEAECRQYEEKIRSYGKIHLFMGGVGNDGHIAFNEPASSLASRTRIKTLTHDTRVANSRFFDNDVNQVPKYALTVGVGTLLDAEEVMILVLGSQKALALQAAVEGCVNHMWTISCLQLHPKAIMVCDEPSTMELKVKTLRYFNELEAENIKGL.

Catalysis depends on Asp72, which acts as the Proton acceptor; for enolization step. Asp141 serves as the catalytic For ring-opening step. His143 (proton acceptor; for ring-opening step) is an active-site residue. Glu148 serves as the catalytic For ring-opening step.

This sequence belongs to the glucosamine/galactosamine-6-phosphate isomerase family. NagB subfamily. In terms of assembly, homohexamer; trimer of disulfide-linked dimers.

The catalysed reaction is alpha-D-glucosamine 6-phosphate + H2O = beta-D-fructose 6-phosphate + NH4(+). Its pathway is amino-sugar metabolism; N-acetylneuraminate degradation; D-fructose 6-phosphate from N-acetylneuraminate: step 5/5. Its activity is regulated as follows. Allosterically activated by N-acetylglucosamine 6-phosphate (GlcNAc6P). Its function is as follows. Catalyzes the reversible isomerization-deamination of glucosamine 6-phosphate (GlcN6P) to form fructose 6-phosphate (Fru6P) and ammonium ion. This chain is Glucosamine-6-phosphate deaminase, found in Escherichia coli O6:H1 (strain CFT073 / ATCC 700928 / UPEC).